A 1337-amino-acid polypeptide reads, in one-letter code: Protein cordon-bleu (1337 aa).

Residues 1 to 41 (MDAPRALAAKPPTGRKMKARAPPPPGKPAAQNVHSEQKLPH) form a disordered region. Phosphoserine occurs at positions 47, 50, 212, 235, 272, and 294. Disordered regions lie at residues 260-556 (SKAE…NDDE) and 647-768 (IASQ…HHGQ). Residues 288-317 (CVTTPNSPSLHSRSLTLGPSLSLGNISGVS) show a composition bias toward polar residues. The KKRRAP 1 motif lies at 323–328 (KKRRAP). Phosphoserine occurs at positions 346 and 349. A KKRRAP 2 motif is present at residues 356-361 (KKRRAP). Positions 361 to 374 (PAPPPPQQPPPSPV) are enriched in pro residues. At Ser372 the chain carries Phosphoserine. The segment covering 377–387 (NRKEDKEENRK) has biased composition (basic and acidic residues). A compositionally biased stretch (pro residues) spans 411 to 423 (LVLPPPPPYPPPD). A compositionally biased stretch (acidic residues) spans 469-480 (ESEETASEDTTE). The span at 484 to 500 (VMSSPSDAISLDSQQDS) shows a compositional bias: polar residues. The residue at position 522 (Thr522) is a Phosphothreonine. Low complexity predominate over residues 526–541 (GPQKSPSWGKSGSGSS). Polar residues-rich tracts occupy residues 647–666 (IASQ…QPFV) and 687–710 (QPTL…TSLV). A Phosphoserine modification is found at Ser649. The segment covering 714–736 (LIDDPKAKDKGKVHGSSHSEKTQ) has biased composition (basic and acidic residues). A Phosphoserine modification is found at Ser816. Disordered regions lie at residues 892-923 (TPQQ…SVKV) and 967-991 (KATT…DDAA). A Phosphoserine modification is found at Ser1038. Polar residues predominate over residues 1070–1090 (GFNEKQTTSNQKANSTSNFSQ). Disordered stretches follow at residues 1070 to 1094 (GFNE…ALDK), 1113 to 1133 (MNGS…KEST), 1145 to 1168 (KPSS…FGPK), and 1192 to 1221 (AIHS…SYVE). At Ser1128 the chain carries Phosphoserine. 2 consecutive WH2 domains span residues 1185 to 1205 (LHSA…LRKT) and 1225 to 1245 (ERSA…LRKV). Residues 1197 to 1214 (GGREKLRKTAEQTSEGRP) show a composition bias toward basic and acidic residues. Residues 1262 to 1310 (GAPGLDKPQQEDLGLPPPPALPPPPAPAPQAPSASVTVSRFSTGTPSNS) are disordered. Residues 1276–1291 (LPPPPALPPPPAPAPQ) are compositionally biased toward pro residues. A compositionally biased stretch (polar residues) spans 1297 to 1310 (VTVSRFSTGTPSNS). Position 1303 is a phosphoserine (Ser1303). The region spanning 1313–1333 (ARQALMDAIRSGTGAARLRKV) is the WH2 3 domain.

In terms of assembly, identified in a complex composed of COBL, PACSIN1 and WASL. Interacts with PACSIN1, PACSIN2 and PACSIN3. Identified in a complex composed of ACTA1, COBL, GSN and TMSB4X. Interacts (via WH2 domains) with actin monomers. Interacts with DBNL. As to expression, detected in brain cortex and in the Purkinje cell layer in the cerebellum. Detected in hippocampus neurons, and at lower levels in testis, lung and spleen (at protein level). Detected in embryonic neural tube.

The protein localises to the cell membrane. Its subcellular location is the cytoplasm. It localises to the cytoskeleton. It is found in the cell projection. The protein resides in the ruffle. Functionally, plays an important role in the reorganization of the actin cytoskeleton. Binds to and sequesters actin monomers (G actin). Nucleates actin polymerization by assembling three actin monomers in cross-filament orientation and thereby promotes growth of actin filaments at the barbed end. Can also mediate actin depolymerization at barbed ends and severing of actin filaments. Promotes formation of cell ruffles. Regulates neuron morphogenesis and increases branching of axons and dendrites. Regulates dendrite branching in Purkinje cells. The polypeptide is Protein cordon-bleu (Cobl) (Mus musculus (Mouse)).